We begin with the raw amino-acid sequence, 336 residues long: Cell division protein ZipA (336 aa).

Residues methionine 1–glutamate 2 lie on the Periplasmic side of the membrane. Residues leucine 3–leucine 23 form a helical membrane-spanning segment. The Cytoplasmic portion of the chain corresponds to tryptophan 24–serine 336. The interval proline 56–asparagine 77 is disordered. Polar residues predominate over residues asparagine 59 to histidine 70.

It belongs to the ZipA family. In terms of assembly, interacts with FtsZ via their C-terminal domains.

The protein localises to the cell inner membrane. In terms of biological role, essential cell division protein that stabilizes the FtsZ protofilaments by cross-linking them and that serves as a cytoplasmic membrane anchor for the Z ring. Also required for the recruitment to the septal ring of downstream cell division proteins. This chain is Cell division protein ZipA, found in Actinobacillus pleuropneumoniae serotype 3 (strain JL03).